Consider the following 125-residue polypeptide: Multifunctional methyltransferase subunit TRM112-like protein (125 aa).

A TRM112 domain is found at 2-121 (KLFVHNFMSS…RDGIPNMLKV (120 aa)).

It belongs to the TRM112 family.

The protein resides in the nucleus. It is found in the nucleoplasm. The protein localises to the cytoplasm. Its subcellular location is the perinuclear region. Acts as an activator of both RNA and protein methyltransferases. In Caenorhabditis elegans, this protein is Multifunctional methyltransferase subunit TRM112-like protein.